Reading from the N-terminus, the 287-residue chain is Ribosomal RNA small subunit methyltransferase I (287 aa).

Belongs to the methyltransferase superfamily. RsmI family.

It is found in the cytoplasm. The catalysed reaction is cytidine(1402) in 16S rRNA + S-adenosyl-L-methionine = 2'-O-methylcytidine(1402) in 16S rRNA + S-adenosyl-L-homocysteine + H(+). Functionally, catalyzes the 2'-O-methylation of the ribose of cytidine 1402 (C1402) in 16S rRNA. This chain is Ribosomal RNA small subunit methyltransferase I, found in Streptococcus pyogenes serotype M18 (strain MGAS8232).